Reading from the N-terminus, the 333-residue chain is Torsin-1A (333 aa).

An N-terminal signal peptide occupies residues Met-1–Ala-20. The segment at Lys-92 to Gly-252 is interaction with SNAPIN. N-linked (GlcNAc...) asparagine glycosylation is found at Asn-144 and Asn-159. The tract at residues Gly-252–Asp-333 is interaction with KLC1. Residues Lys-313 to Asp-333 form an interaction with SYNE3 region.

This sequence belongs to the ClpA/ClpB family. Torsin subfamily. In terms of assembly, homohexamer. Interacts with TOR1B; the interaction may be specific of neural tissues. Interacts (ATP-bound) with TOR1AIP1 and TOR1AIP2; the interactions induce ATPase activity. Interacts with KLHL14; preferentially when ATP-free. Interacts with KLC1 (via TPR repeats); the interaction associates TOR1A with the kinesin oligomeric complex. Interacts with COPS4; the interaction associates TOR1A with the CSN complex. Interacts with SNAPIN; the interaction is direct and associates SNAPIN with the CSN complex. Interacts with STON2. Interacts (ATP-bound) with SYNE3 (via KASH domain); the interaction is required for SYNE3 nuclear envelope localization. Interacts with VIM; the interaction associates TOR1A with the cytoskeleton. Interacts with PLEC. Interacts (ATP-bound) with SLC6A3; regulates SLC6A3 transport to the plasma membrane. Post-translationally, N-glycosylated. Expressed in brain (at protein level).

Its subcellular location is the endoplasmic reticulum lumen. The protein localises to the nucleus inner membrane. The protein resides in the cell projection. It is found in the growth cone. It localises to the cytoplasmic vesicle membrane. Its subcellular location is the cytoplasmic vesicle. The protein localises to the secretory vesicle. The protein resides in the synaptic vesicle. It catalyses the reaction ATP + H2O = ADP + phosphate + H(+). Protein with chaperone functions important for the control of protein folding, processing, stability and localization as well as for the reduction of misfolded protein aggregates. Involved in the regulation of synaptic vesicle recycling, controls STON2 protein stability in collaboration with the COP9 signalosome complex (CSN). In the nucleus, may link the cytoskeleton with the nuclear envelope, this mechanism seems to be crucial for the control of nuclear polarity, cell movement and, specifically in neurons, nuclear envelope integrity. Participates in the cellular trafficking and may regulate the subcellular location of multipass membrane proteins such as the dopamine transporter SLC6A3, leading to the modulation of dopamine neurotransmission. In the endoplasmic reticulum, plays a role in the quality control of protein folding by increasing clearance of misfolded proteins such as SGCE variants or holding them in an intermediate state for proper refolding. May have a redundant function with TOR1B in non-neural tissues. This chain is Torsin-1A (Tor1a), found in Rattus norvegicus (Rat).